We begin with the raw amino-acid sequence, 539 residues long: Chaperonin GroEL (539 aa).

ATP is bound by residues 29-32 (TLGP), 86-90 (DGTTT), glycine 413, 477-479 (DAL), and aspartate 493.

Belongs to the chaperonin (HSP60) family. As to quaternary structure, forms a cylinder of 14 subunits composed of two heptameric rings stacked back-to-back. Interacts with the co-chaperonin GroES.

It is found in the cytoplasm. The enzyme catalyses ATP + H2O + a folded polypeptide = ADP + phosphate + an unfolded polypeptide.. Functionally, together with its co-chaperonin GroES, plays an essential role in assisting protein folding. The GroEL-GroES system forms a nano-cage that allows encapsulation of the non-native substrate proteins and provides a physical environment optimized to promote and accelerate protein folding. This is Chaperonin GroEL from Clostridium perfringens (strain ATCC 13124 / DSM 756 / JCM 1290 / NCIMB 6125 / NCTC 8237 / Type A).